The following is an 83-amino-acid chain: Kunitz-type serine protease inhibitor superbin-3 (83 aa).

The first 24 residues, 1–24 (MSSGGLLLLLGLLTLWEVLTPVSS), serve as a signal peptide directing secretion. The BPTI/Kunitz inhibitor domain maps to 31–81 (CELPADSGSCKGNFQAFYYNPVQHQCLEFIYGGCDGNANNFKTIDECKRTC). Cystine bridges form between Cys-31-Cys-81, Cys-40-Cys-64, and Cys-56-Cys-77.

Belongs to the venom Kunitz-type family. In terms of tissue distribution, expressed by the venom gland.

The protein resides in the secreted. Functionally, serine protease inhibitor. This chain is Kunitz-type serine protease inhibitor superbin-3, found in Austrelaps superbus (Lowland copperhead snake).